The chain runs to 447 residues: Signal recognition particle 54 kDa protein (447 aa).

GTP is bound by residues 108–115, 188–192, and 246–249; these read GLYGMGKT, DTAGR, and TKLD.

This sequence belongs to the GTP-binding SRP family. SRP54 subfamily. As to quaternary structure, part of the signal recognition particle protein translocation system, which is composed of SRP and FtsY. Archaeal SRP consists of a 7S RNA molecule of 300 nucleotides and two protein subunits: SRP54 and SRP19.

It is found in the cytoplasm. The catalysed reaction is GTP + H2O = GDP + phosphate + H(+). Involved in targeting and insertion of nascent membrane proteins into the cytoplasmic membrane. Binds to the hydrophobic signal sequence of the ribosome-nascent chain (RNC) as it emerges from the ribosomes. The SRP-RNC complex is then targeted to the cytoplasmic membrane where it interacts with the SRP receptor FtsY. This is Signal recognition particle 54 kDa protein from Methanopyrus kandleri (strain AV19 / DSM 6324 / JCM 9639 / NBRC 100938).